The following is a 546-amino-acid chain: Pre-mRNA-splicing factor 38B (546 aa).

The span at 1 to 14 shows a compositional bias: polar residues; sequence MANNSPALTGNSQP. A disordered region spans residues 1–40; that stretch reads MANNSPALTGNSQPQHQAAAAAAQQQQQCGGGGATKPAVS. Alanine 2 is subject to N-acetylalanine. Serine 5 is subject to Phosphoserine. Residues 15 to 28 show a composition bias toward low complexity; sequence QHQAAAAAAQQQQQ. Lysine 227 bears the N6-acetyllysine mark. Residues 229 to 546 are disordered; sequence IDQQIKTRPR…KQHKNKDETV (318 aa). Residues 243–255 are compositionally biased toward basic and acidic residues; sequence DGKEGAEEIDRHV. The segment covering 256–284 has biased composition (basic residues); it reads ERRRSRSPRRSLSPRRSPRRSRSRSHHRE. Phosphoserine occurs at positions 288, 290, 318, and 320. Over residues 291–327 the composition is skewed to basic and acidic residues; sequence FDRELEREKERQRLEREAKEREKERRRSRSIDRGLER. Residues 292–321 are a coiled coil; that stretch reads DRELEREKERQRLEREAKEREKERRRSRSI. Positions 328–344 are enriched in basic residues; sequence RRSRSRERHRSRSRSRD. The segment covering 345 to 421 has biased composition (basic and acidic residues); the sequence is RKGDRRDRDR…HRDDKRDSKK (77 aa). Over residues 422–450 the composition is skewed to basic residues; sequence EKKHSRSRSRERKHRSRSRSRNAGKRSRS. Serine 448 is modified (phosphoserine). Residues 451–468 show a composition bias toward basic and acidic residues; it reads RSKEKSSKHKNESKEKSN. 3 positions are modified to phosphoserine: serine 473, serine 475, and serine 481. Residues 480-495 are compositionally biased toward basic and acidic residues; that stretch reads DSVEKSKKREHSPSKE. Basic residues predominate over residues 496-510; sequence KSRKRSRSKERSHKR. Residues 511–546 are compositionally biased toward basic and acidic residues; that stretch reads DHSDSKDQSDKHDRRRSQSIEQESQEKQHKNKDETV. 3 positions are modified to phosphoserine: serine 527, serine 529, and serine 534.

Belongs to the PRP38 family.

It is found in the nucleus. In terms of biological role, may be required for pre-mRNA splicing. This Homo sapiens (Human) protein is Pre-mRNA-splicing factor 38B (PRPF38B).